A 559-amino-acid polypeptide reads, in one-letter code: Sesquiterpene synthase TPS3 (559 aa).

Residues Arg-275, Asp-312, Asp-316, Arg-453, and Asp-456 each contribute to the (2E,6E)-farnesyl diphosphate site. Residues Asp-312 and Asp-316 each coordinate Mg(2+). Residues 312-316 (DDTYD) carry the DDXXD motif motif. Mg(2+) contacts are provided by Asp-456, Thr-460, and Glu-464.

The protein belongs to the terpene synthase family. Tpsa subfamily. In terms of assembly, monomer. Mg(2+) is required as a cofactor. As to expression, highly expressed in glandular trichomes. Expressed in roots and leaves.

Its subcellular location is the cytoplasm. The enzyme catalyses (2E,6E)-farnesyl diphosphate = (+)-(R)-germacrene A + diphosphate. The protein operates within secondary metabolite biosynthesis; terpenoid biosynthesis. Functionally, sesquiterpene synthase involved in the biosynthesis of volatile compounds. Mediates the conversion of (2E,6E)-farnesyl diphosphate (FPP) into (+)-(R)-germacrene A. The protein is Sesquiterpene synthase TPS3 of Xanthium strumarium (Rough cocklebur).